Here is an 88-residue protein sequence, read N- to C-terminus: MGTARFLRAVLLLSVLLMVTFPALLSAEHHDGRVGICRLPSDSGDCLRFFEMWYFDGTTCTKFVYGGYGGNNNRFPTEKACMKRCAKA.

A signal peptide spans methionine 1–alanine 27. The propeptide occupies glutamate 28–arginine 33. Residues cysteine 37–cysteine 85 enclose the BPTI/Kunitz inhibitor domain. 2 disulfides stabilise this stretch: cysteine 37–cysteine 85 and cysteine 60–cysteine 81.

This sequence belongs to the venom Kunitz-type family. 03 (sub-Kunitz) subfamily. Expressed by the venom gland.

The protein localises to the secreted. Serine protease inhibitor that inhibits trypsin at a molar ratio of 1:1. This is Kunitz-type U15-theraphotoxin-Hhn1f from Cyriopagopus hainanus (Chinese bird spider).